A 261-amino-acid chain; its full sequence is Enolase-phosphatase E1 (261 aa).

Positions 16 and 18 each coordinate Mg(2+). Substrate contacts are provided by residues S153–S154 and K187. D212 lines the Mg(2+) pocket.

Belongs to the HAD-like hydrolase superfamily. MasA/MtnC family. In terms of assembly, monomer. It depends on Mg(2+) as a cofactor.

It is found in the cytoplasm. The protein localises to the nucleus. It carries out the reaction 5-methylsulfanyl-2,3-dioxopentyl phosphate + H2O = 1,2-dihydroxy-5-(methylsulfanyl)pent-1-en-3-one + phosphate. Its pathway is amino-acid biosynthesis; L-methionine biosynthesis via salvage pathway; L-methionine from S-methyl-5-thio-alpha-D-ribose 1-phosphate: step 3/6. The protein operates within amino-acid biosynthesis; L-methionine biosynthesis via salvage pathway; L-methionine from S-methyl-5-thio-alpha-D-ribose 1-phosphate: step 4/6. Its function is as follows. Bifunctional enzyme that catalyzes the enolization of 2,3-diketo-5-methylthiopentyl-1-phosphate (DK-MTP-1-P) into the intermediate 2-hydroxy-3-keto-5-methylthiopentenyl-1-phosphate (HK-MTPenyl-1-P), which is then dephosphorylated to form the acireductone 1,2-dihydroxy-3-keto-5-methylthiopentene (DHK-MTPene). The protein is Enolase-phosphatase E1 of Bos taurus (Bovine).